The following is a 255-amino-acid chain: Taurine import ATP-binding protein TauB (255 aa).

The ABC transporter domain maps to 2-229; that stretch reads LQISHLYADY…RFVAGESSRS (228 aa). ATP is bound at residue 34 to 41; the sequence is GPSGCGKT.

It belongs to the ABC transporter superfamily. Taurine importer (TC 3.A.1.17.1) family. The complex is composed of two ATP-binding proteins (TauB), two transmembrane proteins (TauC) and a solute-binding protein (TauA).

The protein localises to the cell inner membrane. It carries out the reaction taurine(out) + ATP + H2O = taurine(in) + ADP + phosphate + H(+). Functionally, part of the ABC transporter complex TauABC involved in taurine import. Responsible for energy coupling to the transport system. This chain is Taurine import ATP-binding protein TauB, found in Escherichia coli O6:H1 (strain CFT073 / ATCC 700928 / UPEC).